Consider the following 253-residue polypeptide: Tabinhibitin 3 (253 aa).

The N-terminal stretch at 1-22 (MTLKRIFCAALALIVLQSVASA) is a signal peptide. In terms of domain architecture, SCP spans 66 to 209 (LQKTNWLRGV…LKRALFTCNF (144 aa)). The Cell attachment site signature appears at 222 to 224 (RGD).

It belongs to the CRISP family. Expressed in salivary glands.

The protein localises to the secreted. Its function is as follows. Inhibits platelet aggregation induced by all agonists tested (ADP, arachidonic acid, the thromboxane A2 analog U46619, thrombin, and snake venom snaclecs (TMVA that activates platelet through GPIB, and stejnulxin that specifically acts through GPVI (GP6))). May act by competing with fibrinogen for binding to glycoprotein IIb/IIIa (ITGA2B/ITGB3). The protein is Tabinhibitin 3 of Tabanus yao (Horsefly).